The primary structure comprises 323 residues: Phosphate acetyltransferase (323 aa).

The protein belongs to the phosphate acetyltransferase and butyryltransferase family.

The protein localises to the cytoplasm. It carries out the reaction acetyl-CoA + phosphate = acetyl phosphate + CoA. It functions in the pathway metabolic intermediate biosynthesis; acetyl-CoA biosynthesis; acetyl-CoA from acetate: step 2/2. The chain is Phosphate acetyltransferase (pta) from Bacillus subtilis (strain 168).